Consider the following 44-residue polypeptide: MVDETKLNLIEIVLRAYDPUYSCAAHMIVEDAEGNVVFEIVNDE.

Positions 20 and 23 each coordinate Ni(2+). Position 20 (Sec20) is a non-standard amino acid, selenocysteine. Residues 27–44 (MIVEDAEGNVVFEIVNDE) constitute a propeptide, removed in mature form.

It belongs to the [NiFe]/[NiFeSe] hydrogenase large subunit family. The F420-non-reducing hydrogenase vhu is composed of four subunits; VhuA, VhuD, VhuG and VhuU. Ni(2+) is required as a cofactor.

This Methanococcus voltae protein is F420-non-reducing hydrogenase vhu subunit U (vhuU).